Here is a 50-residue protein sequence, read N- to C-terminus: Mast cell degranulating peptide (50 aa).

The N-terminal stretch at 1–27 (MISMLRCTFFFVSVILITSYFVTPTMS) is a signal peptide. Residue lysine 29 is modified to N6-formyllysine. Cysteine 30 and cysteine 42 form a disulfide bridge. Residues lysine 44 and lysine 48 each carry the N6-formyllysine modification. Residue asparagine 49 is modified to Asparagine amide.

In terms of tissue distribution, expressed by the venom gland.

The protein resides in the secreted. Potent anti-inflammatory agent. At low concentrations, mediates the degranulation of mast cells thus evoking an inflammatory response. Also acts as a neurotoxin capable of blocking a class of voltage-gated potassium channels. The sequence is that of Mast cell degranulating peptide from Apis cerana cerana (Oriental honeybee).